The following is a 148-amino-acid chain: Large ribosomal subunit protein bL9 (148 aa).

The protein belongs to the bacterial ribosomal protein bL9 family.

Binds to the 23S rRNA. This Pseudomonas putida (strain ATCC 700007 / DSM 6899 / JCM 31910 / BCRC 17059 / LMG 24140 / F1) protein is Large ribosomal subunit protein bL9.